We begin with the raw amino-acid sequence, 438 residues long: Aspartate--tRNA(Asp) ligase (438 aa).

Position 170 (E170) interacts with L-aspartate. The interval 192 to 195 (QLYK) is aspartate. R214 lines the L-aspartate pocket. ATP is bound by residues 214–216 (RAE), 222–224 (RHL), and E361. Residues E361 and S364 each coordinate Mg(2+). Residues S364 and R368 each coordinate L-aspartate. Position 409-412 (409-412 (GAER)) interacts with ATP.

It belongs to the class-II aminoacyl-tRNA synthetase family. Type 2 subfamily. Homodimer. Mg(2+) serves as cofactor.

The protein localises to the cytoplasm. The enzyme catalyses tRNA(Asp) + L-aspartate + ATP = L-aspartyl-tRNA(Asp) + AMP + diphosphate. Catalyzes the attachment of L-aspartate to tRNA(Asp) in a two-step reaction: L-aspartate is first activated by ATP to form Asp-AMP and then transferred to the acceptor end of tRNA(Asp). This Pyrococcus abyssi (strain GE5 / Orsay) protein is Aspartate--tRNA(Asp) ligase.